The primary structure comprises 360 residues: GTPase Obg (360 aa).

The Obg domain maps to 1-156 (MFVDSVEIII…KCVRLELKLI (156 aa)). In terms of domain architecture, OBG-type G spans 157–360 (ADIGLVGFPN…LKFVLLKALQ (204 aa)). GTP-binding positions include 163-170 (GFPNAGKS), 188-192 (FTTLV), 210-213 (DIPG), 279-282 (NKCD), and 341-343 (SAV). Ser170 and Thr190 together coordinate Mg(2+).

It belongs to the TRAFAC class OBG-HflX-like GTPase superfamily. OBG GTPase family. In terms of assembly, monomer. The cofactor is Mg(2+).

Its subcellular location is the cytoplasm. Functionally, an essential GTPase which binds GTP, GDP and possibly (p)ppGpp with moderate affinity, with high nucleotide exchange rates and a fairly low GTP hydrolysis rate. Plays a role in control of the cell cycle, stress response, ribosome biogenesis and in those bacteria that undergo differentiation, in morphogenesis control. The chain is GTPase Obg from Helicobacter pylori (strain J99 / ATCC 700824) (Campylobacter pylori J99).